The primary structure comprises 169 residues: Ribosome maturation factor RimM (169 aa).

One can recognise a PRC barrel domain in the interval 97–169; that stretch reads PGEYYWYQLI…VITVDWDMNF (73 aa).

The protein belongs to the RimM family. As to quaternary structure, binds ribosomal protein uS19.

The protein resides in the cytoplasm. Its function is as follows. An accessory protein needed during the final step in the assembly of 30S ribosomal subunit, possibly for assembly of the head region. Essential for efficient processing of 16S rRNA. May be needed both before and after RbfA during the maturation of 16S rRNA. It has affinity for free ribosomal 30S subunits but not for 70S ribosomes. The chain is Ribosome maturation factor RimM from Legionella pneumophila subsp. pneumophila (strain Philadelphia 1 / ATCC 33152 / DSM 7513).